The sequence spans 438 residues: Elongation factor 1-alpha (438 aa).

Positions 5-228 (KPHLNLVVIG…ALDSLEPPPK (224 aa)) constitute a tr-type G domain. A G1 region spans residues 14-21 (GHVDHGKS). Position 14 to 21 (14 to 21 (GHVDHGKS)) interacts with GTP. S21 contributes to the Mg(2+) binding site. The G2 stretch occupies residues 70-74 (GVTIA). A G3 region spans residues 91-94 (DAPG). Residues 91–95 (DAPGH) and 153–156 (NKMD) contribute to the GTP site. Positions 153 to 156 (NKMD) are G4. Residues 194–196 (SAW) are G5.

This sequence belongs to the TRAFAC class translation factor GTPase superfamily. Classic translation factor GTPase family. EF-Tu/EF-1A subfamily.

Its subcellular location is the cytoplasm. It carries out the reaction GTP + H2O = GDP + phosphate + H(+). Functionally, GTP hydrolase that promotes the GTP-dependent binding of aminoacyl-tRNA to the A-site of ribosomes during protein biosynthesis. The polypeptide is Elongation factor 1-alpha (Staphylothermus marinus (strain ATCC 43588 / DSM 3639 / JCM 9404 / F1)).